The chain runs to 70 residues: MGIGVWELLLLFLIVLVVFGTKRLRNIGGDLGGAIKSFRQAMSENEDKPSEGGARTLEGEVVDKKEKDKV.

Residues Met1–Thr21 form a helical membrane-spanning segment. A disordered region spans residues Met42–Val70. The segment covering Leu57 to Val70 has biased composition (basic and acidic residues).

This sequence belongs to the TatA/E family. In terms of assembly, the Tat system comprises two distinct complexes: a TatABC complex, containing multiple copies of TatA, TatB and TatC subunits, and a separate TatA complex, containing only TatA subunits. Substrates initially bind to the TatABC complex, which probably triggers association of the separate TatA complex to form the active translocon.

It localises to the cell inner membrane. Part of the twin-arginine translocation (Tat) system that transports large folded proteins containing a characteristic twin-arginine motif in their signal peptide across membranes. TatA could form the protein-conducting channel of the Tat system. The protein is Sec-independent protein translocase protein TatA of Methylococcus capsulatus (strain ATCC 33009 / NCIMB 11132 / Bath).